A 259-amino-acid polypeptide reads, in one-letter code: Ribosomal RNA small subunit methyltransferase A (259 aa).

S-adenosyl-L-methionine is bound by residues Asn12, Leu14, Gly39, Glu60, Asp84, and Asn102.

The protein belongs to the class I-like SAM-binding methyltransferase superfamily. rRNA adenine N(6)-methyltransferase family. RsmA subfamily.

It localises to the cytoplasm. The catalysed reaction is adenosine(1518)/adenosine(1519) in 16S rRNA + 4 S-adenosyl-L-methionine = N(6)-dimethyladenosine(1518)/N(6)-dimethyladenosine(1519) in 16S rRNA + 4 S-adenosyl-L-homocysteine + 4 H(+). In terms of biological role, specifically dimethylates two adjacent adenosines (A1518 and A1519) in the loop of a conserved hairpin near the 3'-end of 16S rRNA in the 30S particle. May play a critical role in biogenesis of 30S subunits. The sequence is that of Ribosomal RNA small subunit methyltransferase A from Nitrosospira multiformis (strain ATCC 25196 / NCIMB 11849 / C 71).